We begin with the raw amino-acid sequence, 263 residues long: Small ribosomal subunit protein uS2 (263 aa).

This sequence belongs to the universal ribosomal protein uS2 family.

This chain is Small ribosomal subunit protein uS2, found in Roseiflexus castenholzii (strain DSM 13941 / HLO8).